The chain runs to 139 residues: Large ribosomal subunit protein uL16 (139 aa).

Positions 1-16 are enriched in basic residues; that stretch reads MLIPRRVKHRKQHHPG. Positions 1 to 25 are disordered; it reads MLIPRRVKHRKQHHPGRSGQATGGT.

This sequence belongs to the universal ribosomal protein uL16 family. As to quaternary structure, part of the 50S ribosomal subunit.

In terms of biological role, binds 23S rRNA and is also seen to make contacts with the A and possibly P site tRNAs. This is Large ribosomal subunit protein uL16 from Leifsonia xyli subsp. xyli (strain CTCB07).